Reading from the N-terminus, the 504-residue chain is Syntaphilin (504 aa).

A disordered region spans residues methionine 1–glutamine 74. Low complexity-rich tracts occupy residues glycine 7–arginine 26 and serine 33–serine 49. The stretch at leucine 79–lysine 161 forms a coiled coil. Residues valine 191 to glycine 244 form a disordered region. Phosphoserine occurs at positions 200 and 204. Residues arginine 207–lysine 217 are compositionally biased toward polar residues. A Phosphothreonine modification is found at threonine 214. Serine 219 bears the Phosphoserine mark. At threonine 235 the chain carries Phosphothreonine. Residues tyrosine 437 to cysteine 456 form a helical membrane-spanning segment.

Binds to STX1A. Interacts with DNM1; this interaction inhibits the binding of DNM1 to AMPH and DNM1-receptor-mediated endocytosis.

Its subcellular location is the membrane. It localises to the synapse. The protein localises to the synaptosome. Inhibits SNARE complex formation by absorbing free STX1A. The polypeptide is Syntaphilin (Rattus norvegicus (Rat)).